Reading from the N-terminus, the 125-residue chain is Snaclec B7 (125 aa).

3 disulfide bridges follow: cysteine 2–cysteine 13, cysteine 30–cysteine 119, and cysteine 96–cysteine 111. Residues 9 to 120 (HEGHCYKVFK…CNISQYFVCQ (112 aa)) enclose the C-type lectin domain. Asparagine 112 carries N-linked (GlcNAc...) asparagine glycosylation.

It belongs to the snaclec family. Heterodimer; disulfide-linked. In terms of tissue distribution, expressed by the venom gland.

Its subcellular location is the secreted. In terms of biological role, interferes with one step of hemostasis (modulation of platelet aggregation, or coagulation cascade, for example). The protein is Snaclec B7 of Macrovipera lebetinus (Levantine viper).